A 197-amino-acid polypeptide reads, in one-letter code: Holliday junction branch migration complex subunit RuvA (197 aa).

The segment at 1–63 (MYAYLKGIIT…EDAHLLYGFR (63 aa)) is domain I. A domain II region spans residues 64–142 (SEDEKKLFLS…VAGDDLPAKI (79 aa)). A flexible linker region spans residues 143 to 147 (AVQAS). The segment at 148–197 (AENQELEEAMEAMLALGYKATELKKIKKFFEGTTDTAENYIKSALKMLVK) is domain III.

It belongs to the RuvA family. As to quaternary structure, homotetramer. Forms an RuvA(8)-RuvB(12)-Holliday junction (HJ) complex. HJ DNA is sandwiched between 2 RuvA tetramers; dsDNA enters through RuvA and exits via RuvB. An RuvB hexamer assembles on each DNA strand where it exits the tetramer. Each RuvB hexamer is contacted by two RuvA subunits (via domain III) on 2 adjacent RuvB subunits; this complex drives branch migration. In the full resolvosome a probable DNA-RuvA(4)-RuvB(12)-RuvC(2) complex forms which resolves the HJ.

The protein resides in the cytoplasm. The RuvA-RuvB-RuvC complex processes Holliday junction (HJ) DNA during genetic recombination and DNA repair, while the RuvA-RuvB complex plays an important role in the rescue of blocked DNA replication forks via replication fork reversal (RFR). RuvA specifically binds to HJ cruciform DNA, conferring on it an open structure. The RuvB hexamer acts as an ATP-dependent pump, pulling dsDNA into and through the RuvAB complex. HJ branch migration allows RuvC to scan DNA until it finds its consensus sequence, where it cleaves and resolves the cruciform DNA. This Streptococcus pneumoniae (strain Taiwan19F-14) protein is Holliday junction branch migration complex subunit RuvA.